The following is a 332-amino-acid chain: 5-dehydro-2-deoxygluconokinase 2 (332 aa).

It belongs to the carbohydrate kinase PfkB family.

It catalyses the reaction 5-dehydro-2-deoxy-D-gluconate + ATP = 6-phospho-5-dehydro-2-deoxy-D-gluconate + ADP + H(+). It functions in the pathway polyol metabolism; myo-inositol degradation into acetyl-CoA; acetyl-CoA from myo-inositol: step 5/7. Its function is as follows. Catalyzes the phosphorylation of 5-dehydro-2-deoxy-D-gluconate (2-deoxy-5-keto-D-gluconate or DKG) to 6-phospho-5-dehydro-2-deoxy-D-gluconate (DKGP). This chain is 5-dehydro-2-deoxygluconokinase 2, found in Bacillus cereus (strain ZK / E33L).